The sequence spans 105 residues: Large ribosomal subunit protein bL21 (105 aa).

The protein belongs to the bacterial ribosomal protein bL21 family. In terms of assembly, part of the 50S ribosomal subunit. Contacts protein L20.

This protein binds to 23S rRNA in the presence of protein L20. This chain is Large ribosomal subunit protein bL21, found in Frankia casuarinae (strain DSM 45818 / CECT 9043 / HFP020203 / CcI3).